Consider the following 194-residue polypeptide: Threonylcarbamoyl-AMP synthase (194 aa).

Residues 12-194 (SPNMKDLLIQ…DVMTGKLIRE (183 aa)) form the YrdC-like domain.

The protein belongs to the SUA5 family. TsaC subfamily.

The protein localises to the cytoplasm. The enzyme catalyses L-threonine + hydrogencarbonate + ATP = L-threonylcarbamoyladenylate + diphosphate + H2O. Functionally, required for the formation of a threonylcarbamoyl group on adenosine at position 37 (t(6)A37) in tRNAs that read codons beginning with adenine. Catalyzes the conversion of L-threonine, HCO(3)(-)/CO(2) and ATP to give threonylcarbamoyl-AMP (TC-AMP) as the acyladenylate intermediate, with the release of diphosphate. This chain is Threonylcarbamoyl-AMP synthase, found in Blochmanniella pennsylvanica (strain BPEN).